Consider the following 51-residue polypeptide: Putative ribosomal protein eL39-like 5 (51 aa).

The protein belongs to the eukaryotic ribosomal protein eL39 family.

This Homo sapiens (Human) protein is Putative ribosomal protein eL39-like 5 (RPL39P5).